The sequence spans 254 residues: Aspartate/glutamate leucyltransferase (254 aa).

Belongs to the R-transferase family. Bpt subfamily.

It localises to the cytoplasm. It carries out the reaction N-terminal L-glutamyl-[protein] + L-leucyl-tRNA(Leu) = N-terminal L-leucyl-L-glutamyl-[protein] + tRNA(Leu) + H(+). It catalyses the reaction N-terminal L-aspartyl-[protein] + L-leucyl-tRNA(Leu) = N-terminal L-leucyl-L-aspartyl-[protein] + tRNA(Leu) + H(+). Functionally, functions in the N-end rule pathway of protein degradation where it conjugates Leu from its aminoacyl-tRNA to the N-termini of proteins containing an N-terminal aspartate or glutamate. The polypeptide is Aspartate/glutamate leucyltransferase (Maricaulis maris (strain MCS10) (Caulobacter maris)).